The primary structure comprises 402 residues: MNVATDPILTSILDTDAYKFHMQQAVFHRYHDVMVSAKFRCRGYELLGEYAADISAQVDMMRGLQLNDDEFTYLRGLPFFQSDYLNCLRQFRFDPSQVRIRNHHGKLDIRITGPWRDVILWEVPLLAVISEVVHHRRSPQVTTADAVARLRQKLLHFRRISEDLDTSRFRLMDFGTRRRFSRQVQFEVIAELQREFPYLIGTSNYQLARERGLPPIGTQAHEWFQAHQQISPDLANSQSAALQAWLDEYPDRLGIALTDCITMDAFLRDFGPSFARAYQGMRHDSGDPVEWGEKAIAHYQQLGIDPLTKTLVFSDSLDFDKAFMLYRHFWQRINLVFGIGTRLTCDIPGIKPLNIVIKLVKCNGKPVAKLSDSPGKIMCHDKAFVRALRKAFDVPLVVKKAS.

Histidine 221 is modified (phosphohistidine; by autocatalysis).

This sequence belongs to the NAPRTase family. In terms of processing, transiently phosphorylated on a His residue during the reaction cycle. Phosphorylation strongly increases the affinity for substrates and increases the rate of nicotinate D-ribonucleotide production. Dephosphorylation regenerates the low-affinity form of the enzyme, leading to product release.

The catalysed reaction is nicotinate + 5-phospho-alpha-D-ribose 1-diphosphate + ATP + H2O = nicotinate beta-D-ribonucleotide + ADP + phosphate + diphosphate. It functions in the pathway cofactor biosynthesis; NAD(+) biosynthesis; nicotinate D-ribonucleotide from nicotinate: step 1/1. Functionally, catalyzes the synthesis of beta-nicotinate D-ribonucleotide from nicotinate and 5-phospho-D-ribose 1-phosphate at the expense of ATP. The protein is Nicotinate phosphoribosyltransferase of Sodalis glossinidius (strain morsitans).